Consider the following 265-residue polypeptide: Tryptophan synthase alpha chain (265 aa).

Residues glutamate 45 and aspartate 56 each act as proton acceptor in the active site.

It belongs to the TrpA family. As to quaternary structure, tetramer of two alpha and two beta chains.

The enzyme catalyses (1S,2R)-1-C-(indol-3-yl)glycerol 3-phosphate + L-serine = D-glyceraldehyde 3-phosphate + L-tryptophan + H2O. It participates in amino-acid biosynthesis; L-tryptophan biosynthesis; L-tryptophan from chorismate: step 5/5. Functionally, the alpha subunit is responsible for the aldol cleavage of indoleglycerol phosphate to indole and glyceraldehyde 3-phosphate. In Halalkalibacterium halodurans (strain ATCC BAA-125 / DSM 18197 / FERM 7344 / JCM 9153 / C-125) (Bacillus halodurans), this protein is Tryptophan synthase alpha chain.